We begin with the raw amino-acid sequence, 340 residues long: RNA 3'-terminal phosphate cyclase (340 aa).

ATP is bound by residues Gln-102 and 284–288; that span reads FLGDQ. His-308 functions as the Tele-AMP-histidine intermediate in the catalytic mechanism.

The protein belongs to the RNA 3'-terminal cyclase family. Type 1 subfamily.

The protein localises to the cytoplasm. It carries out the reaction a 3'-end 3'-phospho-ribonucleotide-RNA + ATP = a 3'-end 2',3'-cyclophospho-ribonucleotide-RNA + AMP + diphosphate. In terms of biological role, catalyzes the conversion of 3'-phosphate to a 2',3'-cyclic phosphodiester at the end of RNA. The mechanism of action of the enzyme occurs in 3 steps: (A) adenylation of the enzyme by ATP; (B) transfer of adenylate to an RNA-N3'P to produce RNA-N3'PP5'A; (C) and attack of the adjacent 2'-hydroxyl on the 3'-phosphorus in the diester linkage to produce the cyclic end product. The biological role of this enzyme is unknown but it is likely to function in some aspects of cellular RNA processing. In Thermococcus onnurineus (strain NA1), this protein is RNA 3'-terminal phosphate cyclase.